A 145-amino-acid polypeptide reads, in one-letter code: Protein FAM216B (145 aa).

The disordered stretch occupies residues 92–121 (TKRASAKAGPHRTVPQRAAGRTRTQPSARP).

It belongs to the FAM216 family.

In Bos taurus (Bovine), this protein is Protein FAM216B (FAM216B).